The following is a 146-amino-acid chain: Hemoglobin subunit beta-1 (146 aa).

In terms of domain architecture, Globin spans 2–146 (EWTDKERAII…VVSALGKQYH (145 aa)). 2 residues coordinate heme b: H63 and H92.

The protein belongs to the globin family. In terms of assembly, hb 1 is a heterotetramer of two alpha-1 and two beta-1 chains. In terms of tissue distribution, red blood cells.

Involved in oxygen transport from gills to the various peripheral tissues. This Gobionotothen gibberifrons (Humped rockcod) protein is Hemoglobin subunit beta-1 (hbb1).